A 155-amino-acid polypeptide reads, in one-letter code: MNPLRKKRLLIIVALLAGVGLAVTLALSALQENINLFYTPSQIANGEAPLDTRIRAGGMVEKGSLQRSADSLDVRFVVTDFNKSVTITYRGILPDLFREGQGIVALGKLNAQGVVVADEVLAKHDEKYMPPEVTKALRDSGRAAPAASPTPVKQG.

Topologically, residues 1–8 (MNPLRKKR) are cytoplasmic. Residues 9-29 (LLIIVALLAGVGLAVTLALSA) form a helical; Signal-anchor for type II membrane protein membrane-spanning segment. Residues 30-155 (LQENINLFYT…AASPTPVKQG (126 aa)) are Periplasmic-facing. Heme contacts are provided by His-124 and Tyr-128.

The protein belongs to the CcmE/CycJ family.

The protein localises to the cell inner membrane. In terms of biological role, heme chaperone required for the biogenesis of c-type cytochromes. Transiently binds heme delivered by CcmC and transfers the heme to apo-cytochromes in a process facilitated by CcmF and CcmH. This Pseudomonas syringae pv. syringae (strain B728a) protein is Cytochrome c-type biogenesis protein CcmE.